Reading from the N-terminus, the 252-residue chain is 3-dehydroquinate dehydratase (252 aa).

Residues Ser-21, 46 to 48, and Arg-82 contribute to the 3-dehydroquinate site; that span reads EWR. His-143 serves as the catalytic Proton donor/acceptor. The Schiff-base intermediate with substrate role is filled by Lys-170. 3-dehydroquinate is bound by residues Arg-213, Ser-232, and Gln-236.

This sequence belongs to the type-I 3-dehydroquinase family. In terms of assembly, homodimer.

It carries out the reaction 3-dehydroquinate = 3-dehydroshikimate + H2O. Its pathway is metabolic intermediate biosynthesis; chorismate biosynthesis; chorismate from D-erythrose 4-phosphate and phosphoenolpyruvate: step 3/7. Involved in the third step of the chorismate pathway, which leads to the biosynthesis of aromatic amino acids. Catalyzes the cis-dehydration of 3-dehydroquinate (DHQ) and introduces the first double bond of the aromatic ring to yield 3-dehydroshikimate. This chain is 3-dehydroquinate dehydratase, found in Salmonella paratyphi A (strain ATCC 9150 / SARB42).